The sequence spans 402 residues: Advanced glycosylation end product-specific receptor (402 aa).

Positions 1-22 (MPTGTVARAWVLVLALWGAVAG) are cleaved as a signal peptide. The Ig-like V-type domain occupies 23 to 109 (GQNITARIGE…ATNRLGKEVK (87 aa)). Topologically, residues 23-341 (GQNITARIGE…DGSGLGTLAL (319 aa)) are extracellular. N-linked (GlcNAc...) asparagine glycosylation is found at Asn25 and Asn80. 2 disulfides stabilise this stretch: Cys38/Cys98 and Cys143/Cys206. Ig-like C2-type domains are found at residues 123–219 (PEIV…RPLN) and 233–315 (PEGI…PPVN). Residues 342–362 (ALGILGGLGIAALLIGAILWR) form a helical membrane-spanning segment. Over 363–402 (KRQPRLEERKAPESQEDEEERAELNQSEEAEMPENGAGGP) the chain is Cytoplasmic. The interval 368-402 (LEERKAPESQEDEEERAELNQSEEAEMPENGAGGP) is disordered. Ser376 and Ser389 each carry phosphoserine. Over residues 376-394 (SQEDEEERAELNQSEEAEM) the composition is skewed to acidic residues.

In terms of assembly, constitutive homodimer; disulfide-linked. Forms homooligomers. Interacts with S100A1 and APP. Interacts with S100B, S100A12 and S100A14. Interacts with TIRAP. Interacts with HMGB1. Interacts with LGP2; this interaction plays an important role in AGER-mediated pro-inflammatory responses and cytokine release. Interacts with double-strand break repair protein MRE11 which is a core component of the MRN complex; the interaction enhances MRE11 endonuclease activity and promotes DNA repair. Interacts with the MCM2-7 complex via interaction with complex member MCM2; the interaction is increased following DNA replication stress and stabilizes the MCM2-7 complex at replication forks. Phosphorylated on its cytoplasmic domain by PKCzeta/PRKCZ upon ligand binding. Phosphorylated by ATM following DNA damage. Post-translationally, targeted by the ubiquitin E3 ligase subunit FBXO10 to mediate its ubiquitination and degradation. In terms of tissue distribution, endothelial cells and cardiomyocytes. Expressed in brain.

It is found in the cell membrane. Its subcellular location is the cell projection. The protein resides in the phagocytic cup. It localises to the early endosome. The protein localises to the nucleus. Its function is as follows. Cell surface pattern recognition receptor that senses endogenous stress signals with a broad ligand repertoire including advanced glycation end products, S100 proteins, high-mobility group box 1 protein/HMGB1, amyloid beta/APP oligomers, nucleic acids, histones, phospholipids and glycosaminoglycans. Advanced glycosylation end products are nonenzymatically glycosylated proteins which accumulate in vascular tissue in aging and at an accelerated rate in diabetes. These ligands accumulate at inflammatory sites during the pathogenesis of various diseases including diabetes, vascular complications, neurodegenerative disorders and cancers, and RAGE transduces their binding into pro-inflammatory responses. Upon ligand binding, uses TIRAP and MYD88 as adapters to transduce the signal ultimately leading to the induction of inflammatory cytokines IL6, IL8 and TNFalpha through activation of NF-kappa-B. Interaction with S100A12 on endothelium, mononuclear phagocytes, and lymphocytes triggers cellular activation, with generation of key pro-inflammatory mediators. Interaction with S100B after myocardial infarction may play a role in myocyte apoptosis by activating ERK1/2 and p53/TP53 signaling. Contributes to the translocation of amyloid-beta peptide (ABPP) across the cell membrane from the extracellular to the intracellular space in cortical neurons. ABPP-initiated RAGE signaling, especially stimulation of p38 mitogen-activated protein kinase (MAPK), has the capacity to drive a transport system delivering ABPP as a complex with RAGE to the intraneuronal space. Participates in endothelial albumin transcytosis together with HMGB1 through the RAGE/SRC/Caveolin-1 pathway, leading to endothelial hyperpermeability. Mediates the loading of HMGB1 in extracellular vesicles (EVs) that shuttle HMGB1 to hepatocytes by transferrin-mediated endocytosis and subsequently promote hepatocyte pyroptosis by activating the NLRP3 inflammasome. Binds to DNA and promotes extracellular hypomethylated DNA (CpG DNA) uptake by cells via the endosomal route to activate inflammatory responses. Mediates phagocytosis by non-professional phagocytes (NPP) and this is enhanced by binding to ligands including RNA, DNA, HMGB1 and histones. Promotes NPP-mediated phagocytosis of Saccharomyces cerevisiae spores by binding to RNA attached to the spore wall. Also promotes NPP-mediated phagocytosis of apoptotic cells. Following DNA damage, recruited to DNA double-strand break sites where it colocalizes with the MRN repair complex via interaction with double-strand break repair protein MRE11. Enhances the endonuclease activity of MRE11, promoting the end resection of damaged DNA. Promotes DNA damage repair in trophoblasts which enhances trophoblast invasion and contributes to placental development and maintenance. Protects cells from DNA replication stress by localizing to damaged replication forks where it stabilizes the MCM2-7 complex and promotes faithful progression of the replication fork. This is Advanced glycosylation end product-specific receptor (Ager) from Rattus norvegicus (Rat).